The primary structure comprises 406 residues: Probable mannan endo-1,4-beta-mannosidase C (406 aa).

Residues 1–20 (MLINFEKVLSLALLAGSVSG) form the signal peptide. Asparagine 58 carries N-linked (GlcNAc...) asparagine glycosylation. Substrate is bound at residue tryptophan 80. N-linked (GlcNAc...) asparagine glycans are attached at residues asparagine 86 and asparagine 114. A substrate-binding site is contributed by asparagine 201. Glutamate 202 serves as the catalytic Proton donor. Substrate is bound at residue tyrosine 287. The Nucleophile role is filled by glutamate 320. Residue asparagine 338 is glycosylated (N-linked (GlcNAc...) asparagine). Tryptophan 362 contacts substrate.

The protein belongs to the glycosyl hydrolase 5 (cellulase A) family.

The protein localises to the secreted. It catalyses the reaction Random hydrolysis of (1-&gt;4)-beta-D-mannosidic linkages in mannans, galactomannans and glucomannans.. Functionally, endo-1,4-mannanase, a crucial enzyme for depolymerization of seed galactomannans and wood galactoglucomannans. The protein is Probable mannan endo-1,4-beta-mannosidase C (manC) of Aspergillus terreus (strain NIH 2624 / FGSC A1156).